The sequence spans 242 residues: Myb-related protein MYBAS2 (242 aa).

2 consecutive HTH myb-type domains span residues 5-61 (REEI…HPGL) and 62-112 (KRGR…RKKA). A DNA-binding region (H-T-H motif) is located at residues 33-57 (WDFIAKVSGLNRTGKSCRLRWVNYL). The Bipartite nuclear localization signal 1 signature appears at 62-65 (KRGR). A DNA-binding region (H-T-H motif) is located at residues 85 to 108 (WSRIARRLPGRTDNEIKNYWRTHM). A Bipartite nuclear localization signal 2 motif is present at residues 109 to 117 (RKKAQERKS). The disordered stretch occupies residues 110 to 133 (KKAQERKSNMSPSSSSSSLTYQSC). The segment covering 118–133 (NMSPSSSSSSLTYQSC) has biased composition (low complexity).

The protein localises to the nucleus. Functionally, transcription factor. This is Myb-related protein MYBAS2 (MYBAS2) from Oryza sativa subsp. japonica (Rice).